A 387-amino-acid chain; its full sequence is F420-dependent formate dehydrogenase 1 subunit beta (387 aa).

4Fe-4S ferredoxin-type domains follow at residues 275-298 (TIEEWNRQWNKCIKCYGCRDVCPV) and 326-355 (VRMSHMAFSCVNCGQCEDVCPMEIPVARIF). Residues C286, C289, C292, C296, C335, C338, C341, and C345 each contribute to the [4Fe-4S] cluster site. Residues 366 to 387 (LGYRPGVDDEAPPALGGSCPTQ) form a disordered region.

The protein belongs to the FrhB family. As to quaternary structure, dimer of an alpha (FdhA1) and a beta (FdhB1) subunit. [4Fe-4S] cluster is required as a cofactor. Requires FAD as cofactor. Zn(2+) serves as cofactor.

The catalysed reaction is oxidized coenzyme F420-(gamma-L-Glu)(n) + formate + 2 H(+) = reduced coenzyme F420-(gamma-L-Glu)(n) + CO2. In terms of biological role, catalyzes the oxidation of formate to carbon dioxide, with coenzyme F420 as the electron acceptor. In vitro can also use methyl viologen as electron acceptor. The chain is F420-dependent formate dehydrogenase 1 subunit beta from Methanococcus maripaludis (strain DSM 14266 / JCM 13030 / NBRC 101832 / S2 / LL).